Here is a 103-residue protein sequence, read N- to C-terminus: Alpha-ketoglutarate dehydrogenase component 4 (103 aa).

Methionine 1 carries the post-translational modification N-acetylmethionine. Lysine 5 is subject to N6-succinyllysine. Positions 23 to 70 are disordered; sequence IRFPDRRDNPKPNVSEVLRSAGLPSHTSSISQHSKGSKSPDWLMHQGP. Residues 47–61 are compositionally biased toward low complexity; it reads SHTSSISQHSKGSKS. 2 positions are modified to phosphoserine: serine 61 and serine 90.

Belongs to the alpha-ketoglutarate dehydrogenase component 4 family. In terms of assembly, component of the 2-oxoglutarate dehydrogenase complex (OGDHC), composed of OGDH (2-oxoglutarate dehydrogenase; also called E1 subunit), DLST (dihydrolipoamide succinyltransferase; also called E2 subunit) and DLD (dihydrolipoamide dehydrogenase; also called E3 subunit), and the assembly factor KGD4. Within OGDHC complex, interacts (via N-terminus) with E3 subunit and (via C-terminus) with E2 subunit.

The protein resides in the mitochondrion. Functionally, molecular adapter that is necessary to form a stable 2-oxoglutarate dehydrogenase enzyme complex (OGDHC). Enables the specific recruitment of E3 subunit to E2 subunit in the 2-oxoglutarate dehydrogenase complex (OGDHC). This chain is Alpha-ketoglutarate dehydrogenase component 4 (KGD4), found in Bos taurus (Bovine).